A 138-amino-acid chain; its full sequence is ATP synthase epsilon chain (138 aa).

Belongs to the ATPase epsilon chain family. F-type ATPases have 2 components, CF(1) - the catalytic core - and CF(0) - the membrane proton channel. CF(1) has five subunits: alpha(3), beta(3), gamma(1), delta(1), epsilon(1). CF(0) has three main subunits: a, b and c.

The protein resides in the cell inner membrane. Produces ATP from ADP in the presence of a proton gradient across the membrane. The protein is ATP synthase epsilon chain of Psychrobacter arcticus (strain DSM 17307 / VKM B-2377 / 273-4).